A 224-amino-acid chain; its full sequence is Type II restriction enzyme BstVI (224 aa).

It belongs to the XhoI type II restriction endonuclease family.

The enzyme catalyses Endonucleolytic cleavage of DNA to give specific double-stranded fragments with terminal 5'-phosphates.. Functionally, a P subtype restriction enzyme that recognizes the double-stranded sequence 5'-CTCGAG-3' and cleaves after C-1. In Geobacillus stearothermophilus (Bacillus stearothermophilus), this protein is Type II restriction enzyme BstVI.